The primary structure comprises 1299 residues: MLDVNFFDELRIGLATADDIRQWSHGEVKKPETINYRTLKPEKDGLFCEKIFGPTRDWECYCGKYKRVRFKGIICERCGVEVTRAKVRRERMGHIELAAPVTHIWYFKGVPSRLGYLLDLAPKDLEKVIYFAAYMITFVDEERRTRDLPSLEAHVSVERQQIEQRRDSDLEARAKKLETDLAELEAEGAKADVRRKVREGAEREMKQLRDRAQREIDRLDEVWNRFKNLKVQDLEGDELLYRELRDRFGTYFDGSMGAAALQKRLESFDLDEEAERLREIIRTGKGQKKTRALKRLKVVSAFLQTSNSPKGMVLDCVPVIPPDLRPMVQLDGGRFATSDLNDLYRRVINRNNRLKRLLDLGAPEIIVNNEKRMLQEAVDALFDNGRRGRPVTGPGNRPLKSLSDMLKGKQGRFRQNLLGKRVDYSARSVIVVGPQLKLHQCGLPKAMALELFKPFVMKRLVDLNHAQNIKSAKRMVERGRTVVYDVLEEVIAEHPVLLNRAPTLHRLGIQAFEPQLVEGKAIQIHPLVCTAFNADFDGDQMAVHLPLSAEAQAEARILMLSSNNILKPADGRPVTMPTQDMVLGLFFLTTDSEGRSPKGEGRAFGSSAEAIMAFDAGDLTLQAKIDIRFPVGTIPPRGFEPPAREEGEPEWQQGDTFTLKTTLGRALFNELLPEDYPFVDYEVGKKQLSEIVNDLAERYPKVIVAATLDNLKAAGFFWATRSGVTVAISDIVVPDAKKEIVKGYEGQDEKVQKQYERGLITKEERTQELIAIWTKATNEVAEAMNDNFPKTNPVSMMVNSGARGNMMQMRQIAGMRGLVSNAKNETIPRPIKASFREGLSVLEYFISTHGARKGLADTALRTADSGYLTRRLVDVSQDVIIREEDCGTERGLKLPIATRDADGTLRKAEDVETSVYARMLAEDVVIDGKVIAPANVDLGDVLIDALVAHGVEEVKTRSILTCESQVGTCAMCYGRSLATGKLVDIGEAVGIIAAQSIGEPGTQLTMRTFHTGGVAGDDITQGLPRVVELFEARTPKGVAPISEASGRVRIEETEKTKKIVVTPDDGSDETAFPISKRARLLVGEGDHVEVGQKLTVGATNPHDVLRILGQRAVQVHLVGEVQKVYNSQGVSIHDKHIEIIIRQMLRRVTIIESGDAELLPGELVERTKFETENRRVVQEGGHPASGRPQLMGITKASLATESWLSAASFQETTRVLTDAAINAKSDSLIGLKENVIIGKLIPAGTGLSRYRNIRVEPTEEAKAAMYSAVGYDDIDYSPFGTGSGQAVPLEDYDYGPYNQ.

Positions 60, 62, 75, and 78 each coordinate Zn(2+). The segment at G385 to M405 is disordered. D535, D537, and D539 together coordinate Mg(2+). Zn(2+) contacts are provided by C886, C962, C969, and C972.

The protein belongs to the RNA polymerase beta' chain family. The RNAP catalytic core consists of 2 alpha, 1 beta, 1 beta' and 1 omega subunit. When a sigma factor is associated with the core the holoenzyme is formed, which can initiate transcription. The cofactor is Mg(2+). Zn(2+) serves as cofactor.

The enzyme catalyses RNA(n) + a ribonucleoside 5'-triphosphate = RNA(n+1) + diphosphate. Functionally, DNA-dependent RNA polymerase catalyzes the transcription of DNA into RNA using the four ribonucleoside triphosphates as substrates. This chain is DNA-directed RNA polymerase subunit beta', found in Streptomyces coelicolor (strain ATCC BAA-471 / A3(2) / M145).